A 60-amino-acid polypeptide reads, in one-letter code: Large ribosomal subunit protein bL33 (60 aa).

This sequence belongs to the bacterial ribosomal protein bL33 family.

This is Large ribosomal subunit protein bL33 from Chlorobium limicola (strain DSM 245 / NBRC 103803 / 6330).